Here is an 825-residue protein sequence, read N- to C-terminus: Probable phosphoketolase (825 aa).

It belongs to the XFP family. The cofactor is thiamine diphosphate.

This chain is Probable phosphoketolase, found in Bifidobacterium animalis subsp. lactis (strain AD011).